A 403-amino-acid polypeptide reads, in one-letter code: Envelope glycoprotein D (403 aa).

An N-terminal signal peptide occupies residues 1–34 (MNRYRYESIFFRYISSTRMILIICLLLGIGDMSA). The Virion surface portion of the chain corresponds to 35–357 (MGLKKDNSPI…ISTEKKSRTQ (323 aa)). N-linked (GlcNAc...) asparagine; by host glycans are attached at residues Asn-87 and Asn-138. Cystine bridges form between Cys-88-Cys-209, Cys-127-Cys-222, and Cys-139-Cys-148. N-linked (GlcNAc...) asparagine; by host glycosylation is found at Asn-230 and Asn-306. A helical membrane pass occupies residues 358–378 (IIISLVVLCVMFCFIVIGSGI). The Intravirion segment spans residues 379–403 (WILRKHRKTVMYDRRRPSRRAYSRL).

Belongs to the herpesviridae glycoprotein D family.

The protein localises to the virion membrane. Its function is as follows. Envelope glycoprotein that binds to host cell entry receptors, promoting the virus entry into host cells. May trigger fusion with host membrane, by recruiting the fusion machinery composed of gB and gH/gL. This Gallus gallus (Chicken) protein is Envelope glycoprotein D (MDV094).